We begin with the raw amino-acid sequence, 152 residues long: Sec-independent protein translocase protein TatB (152 aa).

The chain crosses the membrane as a helical span at residues 1–21; that stretch reads MFDVAPSELLLVAVVALVVIG. The span at 60–71 shows a compositional bias: basic and acidic residues; sequence EDMEKRWAEENA. The interval 60–152 is disordered; it reads EDMEKRWAEE…KEADQQEKQS (93 aa). Low complexity-rich tracts occupy residues 84 to 98 and 124 to 140; these read TAST…PVSD and AANH…STPA. Residues 141 to 152 show a composition bias toward basic and acidic residues; that stretch reads KPKEADQQEKQS.

It belongs to the TatB family. In terms of assembly, the Tat system comprises two distinct complexes: a TatABC complex, containing multiple copies of TatA, TatB and TatC subunits, and a separate TatA complex, containing only TatA subunits. Substrates initially bind to the TatABC complex, which probably triggers association of the separate TatA complex to form the active translocon.

The protein resides in the cell inner membrane. In terms of biological role, part of the twin-arginine translocation (Tat) system that transports large folded proteins containing a characteristic twin-arginine motif in their signal peptide across membranes. Together with TatC, TatB is part of a receptor directly interacting with Tat signal peptides. TatB may form an oligomeric binding site that transiently accommodates folded Tat precursor proteins before their translocation. This Zymomonas mobilis subsp. mobilis (strain ATCC 31821 / ZM4 / CP4) protein is Sec-independent protein translocase protein TatB.